Consider the following 457-residue polypeptide: Allantoinase (457 aa).

Zn(2+) contacts are provided by His-58, His-60, Lys-145, His-181, His-237, and Asp-310. Lys-145 bears the N6-carboxylysine mark.

The protein belongs to the metallo-dependent hydrolases superfamily. Allantoinase family. As to quaternary structure, homotetramer. The cofactor is Zn(2+). Post-translationally, carboxylation allows a single lysine to coordinate two zinc ions.

The enzyme catalyses (S)-allantoin + H2O = allantoate + H(+). It functions in the pathway nitrogen metabolism; (S)-allantoin degradation; allantoate from (S)-allantoin: step 1/1. In terms of biological role, catalyzes the conversion of allantoin (5-ureidohydantoin) to allantoic acid by hydrolytic cleavage of the five-member hydantoin ring. This Solibacter usitatus (strain Ellin6076) protein is Allantoinase.